The chain runs to 404 residues: Cysteine desulfurase IscS (404 aa).

Pyridoxal 5'-phosphate contacts are provided by residues 75–76 (AT), Asn-155, Gln-183, and 203–205 (SAH). At Lys-206 the chain carries N6-(pyridoxal phosphate)lysine. A pyridoxal 5'-phosphate-binding site is contributed by Thr-243. Cys-328 (cysteine persulfide intermediate) is an active-site residue. Cys-328 is a [2Fe-2S] cluster binding site.

This sequence belongs to the class-V pyridoxal-phosphate-dependent aminotransferase family. NifS/IscS subfamily. In terms of assembly, homodimer. Forms a heterotetramer with IscU, interacts with other sulfur acceptors. Pyridoxal 5'-phosphate serves as cofactor.

It localises to the cytoplasm. It catalyses the reaction (sulfur carrier)-H + L-cysteine = (sulfur carrier)-SH + L-alanine. The protein operates within cofactor biosynthesis; iron-sulfur cluster biosynthesis. Functionally, master enzyme that delivers sulfur to a number of partners involved in Fe-S cluster assembly, tRNA modification or cofactor biosynthesis. Catalyzes the removal of elemental sulfur atoms from cysteine to produce alanine. Functions as a sulfur delivery protein for Fe-S cluster synthesis onto IscU, an Fe-S scaffold assembly protein, as well as other S acceptor proteins. This chain is Cysteine desulfurase IscS, found in Pseudomonas putida (strain ATCC 700007 / DSM 6899 / JCM 31910 / BCRC 17059 / LMG 24140 / F1).